The following is a 792-amino-acid chain: Cis-abienol synthase, chloroplastic (792 aa).

A chloroplast-targeting transit peptide spans 1-37; it reads MVLGLRSKIIPLPDHKLGNIKLGSVTNAICHRPCRVR. Mg(2+) is bound by residues Asp539, Asp543, Asn684, and Glu692. Residues 539–543 carry the DDXXD motif motif; the sequence is DDFFD.

This sequence belongs to the terpene synthase family. Requires Mg(2+) as cofactor. Expressed specifically in trichomes.

It is found in the plastid. The protein localises to the chloroplast. The catalysed reaction is 8-hydroxycopalyl diphosphate = cis-abienol + diphosphate. The protein operates within secondary metabolite biosynthesis; terpenoid biosynthesis. Involved in the biosynthesis of cis-abienol, a labdane diterpene that can be used as synthesis precursor of ambergris substitution fragance products. The polypeptide is Cis-abienol synthase, chloroplastic (Nicotiana tabacum (Common tobacco)).